A 409-amino-acid chain; its full sequence is Killer cell lectin-like receptor subfamily G member 2 (409 aa).

A disordered region spans residues 1-120 (MEESWEAAPG…GAEPAPSAWA (120 aa)). The span at 41 to 53 (PEGPESSPSPAGA) shows a compositional bias: low complexity. Over residues 72–81 (SPRPGSPRVP) the composition is skewed to pro residues. Positions 104-120 (PRNGEAPGAEPAPSAWA) are enriched in low complexity. Phosphoserine is present on S158. The tract at residues 193 to 216 (TESGCDAEGRASPAEGSAGSPGSP) is disordered. A compositionally biased stretch (low complexity) spans 202 to 216 (RASPAEGSAGSPGSP). A helical membrane pass occupies residues 263 to 283 (WALAFMAVLLAVSGVVIVVLA). Residues 300–405 (SEEHCYYFSA…CSTPRPWVCA (106 aa)) enclose the C-type lectin domain. Intrachain disulfides connect C321–C404 and C383–C396.

It localises to the membrane. This chain is Killer cell lectin-like receptor subfamily G member 2 (KLRG2), found in Homo sapiens (Human).